The sequence spans 255 residues: tRNA (guanine-N(7)-)-methyltransferase (255 aa).

The segment at M1–W29 is disordered. S-adenosyl-L-methionine-binding residues include E86, E111, D138, and D160. D160 is a catalytic residue. Residues K164, D196, and T233–E236 contribute to the substrate site.

The protein belongs to the class I-like SAM-binding methyltransferase superfamily. TrmB family.

The catalysed reaction is guanosine(46) in tRNA + S-adenosyl-L-methionine = N(7)-methylguanosine(46) in tRNA + S-adenosyl-L-homocysteine. It participates in tRNA modification; N(7)-methylguanine-tRNA biosynthesis. Its function is as follows. Catalyzes the formation of N(7)-methylguanine at position 46 (m7G46) in tRNA. In Ruegeria sp. (strain TM1040) (Silicibacter sp.), this protein is tRNA (guanine-N(7)-)-methyltransferase.